Reading from the N-terminus, the 132-residue chain is Large ribosomal subunit protein uL24 (132 aa).

The protein belongs to the universal ribosomal protein uL24 family. Part of the 50S ribosomal subunit.

Its function is as follows. One of two assembly initiator proteins, it binds directly to the 5'-end of the 23S rRNA, where it nucleates assembly of the 50S subunit. Functionally, one of the proteins that surrounds the polypeptide exit tunnel on the outside of the subunit. The protein is Large ribosomal subunit protein uL24 of Synechococcus sp. (strain JA-3-3Ab) (Cyanobacteria bacterium Yellowstone A-Prime).